The primary structure comprises 321 residues: Mas-related G-protein coupled receptor member D (321 aa).

Residues 1–8 lie on the Extracellular side of the membrane; that stretch reads MNSTLDSS. Asn2 carries an N-linked (GlcNAc...) asparagine glycan. A helical membrane pass occupies residues 9-29; it reads PAPGLTISPTMDLVTWIYFSV. Thr30 is a topological domain (cytoplasmic). Residues 31–51 form a helical membrane-spanning segment; it reads FLAMATCVGGMAGNSLVIWLL. Over 52 to 72 the chain is Extracellular; sequence SCNGMQRSPFCVYVLNLAVAD. A helical membrane pass occupies residues 73–93; it reads FLFLFCMASMLSLETGPLLIV. Over 94-146 the chain is Cytoplasmic; it reads NISAKIYEGMRRIKYFAYTAGLSLLTAISTQRCLSVLFPIWYKCHRPRHLSSV. Residues 147–167 traverse the membrane as a helical segment; it reads VSGALWALAFLMNFLASFFCV. Over 168-181 the chain is Extracellular; that stretch reads QFWHPNKHQCFKVD. A helical membrane pass occupies residues 182–202; it reads IVFNSLILGIFMPVMILTSTI. The Cytoplasmic portion of the chain corresponds to 203 to 220; the sequence is LFIRVRKNSLMQRRRPRR. The chain crosses the membrane as a helical span at residues 221–241; it reads LYVVILTSILVFLTCSLPLGI. Topologically, residues 242 to 260 are extracellular; the sequence is NWFLLYWVDVKRDVRLLYS. Residues 261-281 traverse the membrane as a helical segment; the sequence is CVSRFSSSLSSSANPVIYFLV. At 282–321 the chain is on the cytoplasmic side; it reads GSQKSHRLQESLGAVLGRALRDEPEPEGRETPSTCTNDGV. Residues 302–311 are compositionally biased toward basic and acidic residues; that stretch reads RDEPEPEGRE. The interval 302–321 is disordered; that stretch reads RDEPEPEGRETPSTCTNDGV. Residues 312–321 are compositionally biased toward polar residues; sequence TPSTCTNDGV.

Belongs to the G-protein coupled receptor 1 family. Mas subfamily. As to expression, expressed in a subset of sensory neurons that includes nociceptors. Expressed in the subclass of non-peptidergic sensory neurons that are IB4(+) and VR1(-).

The protein localises to the cell membrane. Functionally, may regulate nociceptor function and/or development, including the sensation or modulation of pain. Functions as a specific membrane receptor for beta-alanine. The receptor couples with G-protein G(q) and G(i). This is Mas-related G-protein coupled receptor member D (Mrgprd) from Mus musculus (Mouse).